A 225-amino-acid chain; its full sequence is MENVLRNDWGPLLAPEFEKEYYLTLSSFLTEEYSTHVVYPKVEDIFNALQYTSYENTKVVILGQDPYHGPNQAHGLSFSVQPGVKTPPSLLNMYKELRDEYGYEIPNNGYLVKWAEQGVLLLNTVLTVRQSEANSHKGKGWEHFTDRVIQLLNEREKPVIFILWGRHAQAKKKLITNPNHHIIESVHPSPLSARRGFFGSKPYSKVNTILANMGEREIDWEIPNL.

The active-site Proton acceptor is the Asp65.

It belongs to the uracil-DNA glycosylase (UDG) superfamily. UNG family.

It is found in the cytoplasm. The enzyme catalyses Hydrolyzes single-stranded DNA or mismatched double-stranded DNA and polynucleotides, releasing free uracil.. In terms of biological role, excises uracil residues from the DNA which can arise as a result of misincorporation of dUMP residues by DNA polymerase or due to deamination of cytosine. In Bacillus cereus (strain G9842), this protein is Uracil-DNA glycosylase.